Reading from the N-terminus, the 312-residue chain is UDP-N-acetylenolpyruvoylglucosamine reductase (312 aa).

Residues 30–202 (RVGGPAQWLA…VAAQFQLEPG (173 aa)) enclose the FAD-binding PCMH-type domain. The active site involves R181. S232 serves as the catalytic Proton donor. The active site involves E302.

Belongs to the MurB family. The cofactor is FAD.

It localises to the cytoplasm. It catalyses the reaction UDP-N-acetyl-alpha-D-muramate + NADP(+) = UDP-N-acetyl-3-O-(1-carboxyvinyl)-alpha-D-glucosamine + NADPH + H(+). It participates in cell wall biogenesis; peptidoglycan biosynthesis. Functionally, cell wall formation. The sequence is that of UDP-N-acetylenolpyruvoylglucosamine reductase from Synechococcus sp. (strain CC9311).